A 195-amino-acid polypeptide reads, in one-letter code: Protein Nef (195 aa).

Gly2 carries N-myristoyl glycine; by host lipidation. An N-terminal; associates with the host plasma membrane region spans residues 2–53; it reads GNIFGRWPGARKAIEDLHNTSSEPVGQASQDLQNKGGLTTNTLGTSADVLEY. The interval 7–22 is necessary for MHC-I internalization; it reads RWPGARKAIEDLHNTS. Residues 59–61 form an acidic region; the sequence is EEE. The tract at residues 65–74 is SH3-binding; the sequence is PVRPAVPMRP. Residues 65 to 74 are SH3-binding; interaction with Src family tyrosine kinases; the sequence is PVRPAVPMRP. The PxxP signature appears at 68–71; the sequence is PAVP. The interval 104–120 is mediates dimerization; the sequence is AILDTWMYNTQGVFPDW. The segment at 144–171 is binding to ATP6V1H; the sequence is VDPPEDDEKNILLHPACSHGTTDPDGET. Residues 155–156 carry the Di-leucine internalization motif; necessary for CD4 internalization motif; that stretch reads LL.

The protein belongs to the lentivirus primate group Nef protein family. Homodimer.

The protein localises to the host cell membrane. It is found in the host cytoplasm. It localises to the host perinuclear region. Its subcellular location is the virion. The protein resides in the secreted. Factor of infectivity and pathogenicity, required for optimal virus replication. Alters numerous pathways of T-lymphocyte function and down-regulates immunity surface molecules in order to evade host defense and increase viral infectivity. Alters the functionality of other immunity cells, like dendritic cells, monocytes/macrophages and NK cells. One of the earliest and most abundantly expressed viral proteins. Its function is as follows. In infected CD4(+) T-lymphocytes, down-regulates the surface MHC-I, mature MHC-II, CD4, CD28 and probably other immunity surface molecules. In consequence infected cells are masked for immune recognition by cytotoxic T-lymphocytes. Decreasing the number of immune receptors also prevents reinfection by more HIV particles (superinfection). Functionally, bypasses host T-cell signaling by inducing a transcriptional program nearly identical to that of anti-CD3 cell activation. Interaction with TCR-zeta chain up-regulates the Fas ligand (FasL). Increasing surface FasL molecules and decreasing surface MHC-I molecules on infected CD4(+) cells send attacking cytotoxic CD8+ T-lymphocytes into apoptosis. In terms of biological role, plays a role in optimizing the host cell environment for viral replication without causing cell death by apoptosis. Protects the infected cells from apoptosis in order to keep them alive until the next virus generation is ready to strike. This is Protein Nef from Pan troglodytes (Chimpanzee).